Consider the following 293-residue polypeptide: Pyridoxal 5'-phosphate synthase subunit PdxS (293 aa).

Residue D23 participates in D-ribose 5-phosphate binding. K80 acts as the Schiff-base intermediate with D-ribose 5-phosphate in catalysis. Residue G152 coordinates D-ribose 5-phosphate. R164 contributes to the D-glyceraldehyde 3-phosphate binding site. D-ribose 5-phosphate is bound by residues G213 and 234-235 (GS).

It belongs to the PdxS/SNZ family. In the presence of PdxT, forms a dodecamer of heterodimers.

It catalyses the reaction aldehydo-D-ribose 5-phosphate + D-glyceraldehyde 3-phosphate + L-glutamine = pyridoxal 5'-phosphate + L-glutamate + phosphate + 3 H2O + H(+). It participates in cofactor biosynthesis; pyridoxal 5'-phosphate biosynthesis. Catalyzes the formation of pyridoxal 5'-phosphate from ribose 5-phosphate (RBP), glyceraldehyde 3-phosphate (G3P) and ammonia. The ammonia is provided by the PdxT subunit. Can also use ribulose 5-phosphate and dihydroxyacetone phosphate as substrates, resulting from enzyme-catalyzed isomerization of RBP and G3P, respectively. The polypeptide is Pyridoxal 5'-phosphate synthase subunit PdxS (Methanothermobacter thermautotrophicus (strain ATCC 29096 / DSM 1053 / JCM 10044 / NBRC 100330 / Delta H) (Methanobacterium thermoautotrophicum)).